The chain runs to 463 residues: Chromosomal replication initiator protein DnaA (463 aa).

The segment at 1 to 83 (MSTNQIILTD…LQLFQHYNNT (83 aa)) is domain I, interacts with DnaA modulators. Positions 83-124 (TIKSIEIITKELPGTTQTVTELPTKTFADIGSSELNSENIFS) are domain II. Residues 125-343 (TLDVRFTFDN…GALNKVIAHS (219 aa)) are domain III, AAA+ region. Gly-171, Gly-173, Lys-174, and Thr-175 together coordinate ATP. Residues 344–463 (NFTLKEITLE…INLLMKILQN (120 aa)) are domain IV, binds dsDNA.

Belongs to the DnaA family. Oligomerizes as a right-handed, spiral filament on DNA at oriC.

It is found in the cytoplasm. Functionally, plays an essential role in the initiation and regulation of chromosomal replication. ATP-DnaA binds to the origin of replication (oriC) to initiate formation of the DNA replication initiation complex once per cell cycle. Binds the DnaA box (a 9 base pair repeat at the origin) and separates the double-stranded (ds)DNA. Forms a right-handed helical filament on oriC DNA; dsDNA binds to the exterior of the filament while single-stranded (ss)DNA is stabiized in the filament's interior. The ATP-DnaA-oriC complex binds and stabilizes one strand of the AT-rich DNA unwinding element (DUE), permitting loading of DNA polymerase. After initiation quickly degrades to an ADP-DnaA complex that is not apt for DNA replication. Binds acidic phospholipids. The polypeptide is Chromosomal replication initiator protein DnaA (Rickettsia conorii (strain ATCC VR-613 / Malish 7)).